The primary structure comprises 446 residues: MSEMTPREIVHELNRHIIGQDNAKRSVAIALRNRWRRMQLEESLRVEVSPKNILMIGPTGVGKTEIARRLAKLANAPFIKVEATKFTEVGYVGKEVETIIRDLTDVAIKMTHQQAMEKVQYRAEEQAEERILDALLPPARDAWGQNEQSTEDTTSSNTRQIFRKKLREGKLDDKEIEVDVAAPQMGVEIMSPPGMEEMTNQLQGMFQNLAGDTKKKRKMKIKDAFKALTEEEAAKLVNQEELKESAIFNAENNGIVFIDEIDKICKRGDSSGPDVSREGVQRDLLPLIEGSTVSTKHGMVKTDHILFITSGAFQVAKPSDLIPELQGRLPIRVELEALSAHDFKRILTEPKASLTEQYIALMKTEDVGIEFTEDGINQIADAAWRVNETTENIGARRLHTVMERLMDEISFDATDRAGSKLVIDEAYVISKLGELVEDEDLSRFIL.

Residues I18, 60 to 65, D259, E324, and R396 each bind ATP; that span reads GVGKTE.

Belongs to the ClpX chaperone family. HslU subfamily. A double ring-shaped homohexamer of HslV is capped on each side by a ring-shaped HslU homohexamer. The assembly of the HslU/HslV complex is dependent on binding of ATP.

It is found in the cytoplasm. Functionally, ATPase subunit of a proteasome-like degradation complex; this subunit has chaperone activity. The binding of ATP and its subsequent hydrolysis by HslU are essential for unfolding of protein substrates subsequently hydrolyzed by HslV. HslU recognizes the N-terminal part of its protein substrates and unfolds these before they are guided to HslV for hydrolysis. The polypeptide is ATP-dependent protease ATPase subunit HslU (Vibrio atlanticus (strain LGP32) (Vibrio splendidus (strain Mel32))).